The chain runs to 416 residues: Tyrosine aminotransferase (416 aa).

Residue lysine 253 is modified to N6-(pyridoxal phosphate)lysine.

It belongs to the class-I pyridoxal-phosphate-dependent aminotransferase family. As to quaternary structure, homodimer. Pyridoxal 5'-phosphate is required as a cofactor. Post-translationally, the N-terminus is blocked.

The protein resides in the cytoplasm. The protein localises to the mitochondrion. It carries out the reaction L-tyrosine + 2-oxoglutarate = 3-(4-hydroxyphenyl)pyruvate + L-glutamate. Its pathway is amino-acid degradation; L-phenylalanine degradation; acetoacetate and fumarate from L-phenylalanine: step 2/6. Its function is as follows. Transaminase involved in tyrosine breakdown. Converts tyrosine to p-hydroxyphenylpyruvate. The polypeptide is Tyrosine aminotransferase (Trypanosoma cruzi).